Here is a 261-residue protein sequence, read N- to C-terminus: DNA repair protein RecO (261 aa).

This sequence belongs to the RecO family.

Involved in DNA repair and RecF pathway recombination. The chain is DNA repair protein RecO from Mycobacteroides abscessus (strain ATCC 19977 / DSM 44196 / CCUG 20993 / CIP 104536 / JCM 13569 / NCTC 13031 / TMC 1543 / L948) (Mycobacterium abscessus).